Consider the following 233-residue polypeptide: 5'-methylthioadenosine/S-adenosylhomocysteine nucleosidase (233 aa).

E12 (proton acceptor) is an active-site residue. Substrate contacts are provided by residues G78, I152, and 173–174 (ME). D197 (proton donor) is an active-site residue.

The protein belongs to the PNP/UDP phosphorylase family. MtnN subfamily. Homodimer.

The catalysed reaction is S-adenosyl-L-homocysteine + H2O = S-(5-deoxy-D-ribos-5-yl)-L-homocysteine + adenine. It catalyses the reaction S-methyl-5'-thioadenosine + H2O = 5-(methylsulfanyl)-D-ribose + adenine. The enzyme catalyses 5'-deoxyadenosine + H2O = 5-deoxy-D-ribose + adenine. It functions in the pathway amino-acid biosynthesis; L-methionine biosynthesis via salvage pathway; S-methyl-5-thio-alpha-D-ribose 1-phosphate from S-methyl-5'-thioadenosine (hydrolase route): step 1/2. Catalyzes the irreversible cleavage of the glycosidic bond in both 5'-methylthioadenosine (MTA) and S-adenosylhomocysteine (SAH/AdoHcy) to adenine and the corresponding thioribose, 5'-methylthioribose and S-ribosylhomocysteine, respectively. Also cleaves 5'-deoxyadenosine, a toxic by-product of radical S-adenosylmethionine (SAM) enzymes, into 5-deoxyribose and adenine. Thus, is required for in vivo function of the radical SAM enzymes biotin synthase and lipoic acid synthase, that are inhibited by 5'-deoxyadenosine accumulation. The chain is 5'-methylthioadenosine/S-adenosylhomocysteine nucleosidase from Yersinia pestis bv. Antiqua (strain Antiqua).